The following is a 250-amino-acid chain: Pyrroloquinoline-quinone synthase (250 aa).

This sequence belongs to the PqqC family.

It carries out the reaction 6-(2-amino-2-carboxyethyl)-7,8-dioxo-1,2,3,4,7,8-hexahydroquinoline-2,4-dicarboxylate + 3 O2 = pyrroloquinoline quinone + 2 H2O2 + 2 H2O + H(+). It functions in the pathway cofactor biosynthesis; pyrroloquinoline quinone biosynthesis. Its function is as follows. Ring cyclization and eight-electron oxidation of 3a-(2-amino-2-carboxyethyl)-4,5-dioxo-4,5,6,7,8,9-hexahydroquinoline-7,9-dicarboxylic-acid to PQQ. The protein is Pyrroloquinoline-quinone synthase of Xanthomonas euvesicatoria pv. vesicatoria (strain 85-10) (Xanthomonas campestris pv. vesicatoria).